The following is a 737-amino-acid chain: Catalase-peroxidase (737 aa).

The first 23 residues, 1-23, serve as a signal peptide directing secretion; the sequence is MLKKILPVLITLAIVHNTPTAWA. A cross-link (tryptophyl-tyrosyl-methioninium (Trp-Tyr) (with M-249)) is located at residues 102–223; that stretch reads WHGAGTYRIY…LAATQMGLIY (122 aa). The Proton acceptor role is filled by H103. Positions 223 to 249 form a cross-link, tryptophyl-tyrosyl-methioninium (Tyr-Met) (with W-102); that stretch reads YVNPEGPNGKPDPVAAAKDIREAFARM. H264 contributes to the heme b binding site.

Belongs to the peroxidase family. Peroxidase/catalase subfamily. Homodimer or homotetramer. Heme b is required as a cofactor. Post-translationally, formation of the three residue Trp-Tyr-Met cross-link is important for the catalase, but not the peroxidase activity of the enzyme.

The enzyme catalyses H2O2 + AH2 = A + 2 H2O. It catalyses the reaction 2 H2O2 = O2 + 2 H2O. Functionally, bifunctional enzyme with both catalase and broad-spectrum peroxidase activity. The polypeptide is Catalase-peroxidase (Yersinia pseudotuberculosis serotype I (strain IP32953)).